Reading from the N-terminus, the 199-residue chain is Large ribosomal subunit protein bL25 (199 aa).

The disordered stretch occupies residues 1 to 21 (MNIEKTLSVQKREGYGKGPSG).

It belongs to the bacterial ribosomal protein bL25 family. CTC subfamily. Part of the 50S ribosomal subunit; part of the 5S rRNA/L5/L18/L25 subcomplex. Contacts the 5S rRNA. Binds to the 5S rRNA independently of L5 and L18.

In terms of biological role, this is one of the proteins that binds to the 5S RNA in the ribosome where it forms part of the central protuberance. In Desulfovibrio desulfuricans (strain ATCC 27774 / DSM 6949 / MB), this protein is Large ribosomal subunit protein bL25.